The primary structure comprises 319 residues: Polyprenyl transferase macG (319 aa).

Transmembrane regions (helical) follow at residues 28–45, 48–68, 106–126, 127–147, 152–172, 182–202, 224–244, 249–269, and 289–309; these read AWLCWYPAIWGACVAAGM, VSLELAPFLRLLFGIWASVTA, AVVAFICWLPVTLAITWGTLG, PAVMAGFIPVWVLSTIYPFMK, FPQVVLGAIIGGAVFPGWVGI, ALPLFFATASWVVYFDVFYAT, VQILLAVLGALQVLLFAVTAL, SLIFWVLGLGVWMVNVPWHIL, and LGLYLTGVSLLELFVVRVYDI.

This sequence belongs to the UbiA prenyltransferase family. Mg(2+) serves as cofactor.

The protein resides in the membrane. The protein operates within secondary metabolite biosynthesis; terpenoid biosynthesis. In terms of biological role, polyprenyl transferase; part of the gene cluster that mediates the biosynthesis of macrophorins, isoprenoid epoxycyclohexenones containing cyclized drimane moieties. The first step of the pathway is the synthesis of 6-methylsalicylic acid (6-MSA) by the polyketide synthase macA. 6-MSA is then converted to m-cresol by the decarboxylase macB. The cytochrome P450 monooxygenase macC then catalyzes the oxidation of m-cresol to toluquinol. Epoxidation of toluquinol is then performed by the short chain dehydrogenase macD, with the help of macE, and a further prenylation by macG leads to 7-deacetoxyyanuthone A. The next step is the hydroxylation of C-22 of 7-deacetoxyyanuthone A by the cytochrome P450 monooxygenase macH to yield 22-deacetylyanuthone A. O-Mevalon transferase macI then attaches mevalon to the hydroxyl group of 22-deacetylyanuthone A to produce yanuthone E. The terpene cyclase macJ catalyzes the cyclization of 22-deacetylyanuthone A to macrophorin A. MacJ is also able to catalyze cyclization of yanuthone E and 7-deacetoxyyanuthone A to their corresponding macrophorins. The macJ products can be further modified by macH and macJ, as well as by the FAD-dependent monooxygenase macF, to produce additional macrophorins, including 4'-oxomacrophorin A, 4'-oxomacrophorin D and 4'-oxomacrophorin E. The polypeptide is Polyprenyl transferase macG (Penicillium terrestre).